The following is a 301-amino-acid chain: Protoheme IX farnesyltransferase (301 aa).

Helical transmembrane passes span 34 to 54 (LVVF…HPLI), 55 to 75 (GLVS…FNMW), 102 to 121 (AWEC…AIAV), 125 to 144 (SALL…TMLL), 152 to 172 (IVIG…SVSG), 181 to 201 (LFAI…LLTL), 222 to 242 (SHIL…GLFV), 247 to 267 (LYEI…IAVF), and 280 to 300 (GLFK…IACV).

It belongs to the UbiA prenyltransferase family. Protoheme IX farnesyltransferase subfamily.

Its subcellular location is the cell inner membrane. It catalyses the reaction heme b + (2E,6E)-farnesyl diphosphate + H2O = Fe(II)-heme o + diphosphate. Its pathway is porphyrin-containing compound metabolism; heme O biosynthesis; heme O from protoheme: step 1/1. Functionally, converts heme B (protoheme IX) to heme O by substitution of the vinyl group on carbon 2 of heme B porphyrin ring with a hydroxyethyl farnesyl side group. The polypeptide is Protoheme IX farnesyltransferase (Anaplasma marginale (strain Florida)).